The chain runs to 292 residues: ATP synthase gamma chain (292 aa).

The protein belongs to the ATPase gamma chain family. As to quaternary structure, F-type ATPases have 2 components, CF(1) - the catalytic core - and CF(0) - the membrane proton channel. CF(1) has five subunits: alpha(3), beta(3), gamma(1), delta(1), epsilon(1). CF(0) has three main subunits: a, b and c.

Its subcellular location is the cell inner membrane. Its function is as follows. Produces ATP from ADP in the presence of a proton gradient across the membrane. The gamma chain is believed to be important in regulating ATPase activity and the flow of protons through the CF(0) complex. This chain is ATP synthase gamma chain, found in Methylobacterium nodulans (strain LMG 21967 / CNCM I-2342 / ORS 2060).